A 747-amino-acid chain; its full sequence is Protein neuralized (747 aa).

Residues 97–251 (PLQFHTVHGD…NCTGIEFLDA (155 aa)) enclose the NHR 1 domain. Over residues 280–292 (LPQQQQQLPQQQL) the composition is skewed to low complexity. A disordered region spans residues 280–309 (LPQQQQQLPQQQLTAHHPLQQSRRSLPGGT). The region spanning 359–514 (PVPFHITKGR…STQSLRMFRQ (156 aa)) is the NHR 2 domain. The RING-type zinc-finger motif lies at 694–735 (CTICYENPIDSVLYMCGHMCMCYDCAIEQWRGVGGGQCPLCR).

The protein resides in the nucleus. Functionally, involved in neurogenesis. Interacts with other neurogenic proteins in the specification of the neuroblast versus epidermoblast cell fate. The polypeptide is Protein neuralized (neur) (Drosophila virilis (Fruit fly)).